We begin with the raw amino-acid sequence, 77 residues long: Acyl carrier protein (77 aa).

The 76-residue stretch at 2 to 77 folds into the Carrier domain; the sequence is SSIEKRVKEI…DAIDYITEHT (76 aa). Ser-37 is subject to O-(pantetheine 4'-phosphoryl)serine.

This sequence belongs to the acyl carrier protein (ACP) family. 4'-phosphopantetheine is transferred from CoA to a specific serine of apo-ACP by AcpS. This modification is essential for activity because fatty acids are bound in thioester linkage to the sulfhydryl of the prosthetic group.

The protein localises to the cytoplasm. Its pathway is lipid metabolism; fatty acid biosynthesis. In terms of biological role, carrier of the growing fatty acid chain in fatty acid biosynthesis. In Geobacter sulfurreducens (strain ATCC 51573 / DSM 12127 / PCA), this protein is Acyl carrier protein.